Consider the following 370-residue polypeptide: MQAQVFRVPMSNPADVSGVAKLIDEGVIRAEEVVCVLGKTEGNGCVNDFTRGYTTLAFKVYFSEKLGVSRQEVGERIAFIMSGGTEGVMAPHCTIFTVQKTDNKQKTAAEGKRLAVQQIFTREFLPEEIGRMPQVTETADAVRRAMREAGIADASDVHFVQVKCPLLTAGRMHDAVERGHTVATEDTYESMGYSRGASALGIALALGEVEKANLSDEVITADYSLYSSVASTSAGIELMNNEIIVMGNSRAWGGDLVIGHAEMKDAIDGAAVRQALRDVGCCENDLPTVDELGRVVNVFAKAEASPDGEVRNRRHTMLDDSDINSTRHARAVVNAVIASIVGDPMVYVSGGSEHQGPAGGGPVAVIARTA.

Residues 1–103 (MQAQVFRVPM…TIFTVQKTDN (103 aa)) form an RU A region. Residues arginine 51 and 82-83 (SG) each bind substrate. The tract at residues 113 to 250 (RLAVQQIFTR…NEIIVMGNSR (138 aa)) is RU B. Lysine 163 is an active-site residue. Substrate contacts are provided by residues arginine 195 and 233–234 (SA). Residue serine 233 is the Nucleophile of the active site. The tract at residues 256–370 (LVIGHAEMKD…GPVAVIARTA (115 aa)) is RU C. Mg(2+) is bound at residue glutamate 303. Substrate-binding positions include arginine 330 and 349–350 (SG). Serine 352, glutamine 355, glycine 356, proline 357, and glycine 360 together coordinate Mg(2+).

This sequence belongs to the cyclic amide hydrolase (CyAH) family. As to quaternary structure, homotetramer.

It carries out the reaction cyanurate + H2O = 1-carboxybiuret + H(+). The protein operates within xenobiotic degradation; atrazine degradation; biuret from cyanurate: step 1/1. With respect to regulation, inhibited by barbituric acid. Functionally, responsible for the hydrolysis of cyanuric acid, an intermediate formed during catabolism of s-triazine based compounds in herbicides such as atrazine and polymers such as melamine. Catalyzes the hydrolytic opening of the s-triazine ring of cyanuric acid (2,4,6-trihydroxy-s-triazine) to yield carbon dioxide and carboxybiuret, which spontaneously decarboxylates to biuret. This chain is Cyanuric acid amidohydrolase (trzD), found in Pseudomonas sp.